The primary structure comprises 92 residues: Small ribosomal subunit protein uS19 (92 aa).

This sequence belongs to the universal ribosomal protein uS19 family.

In terms of biological role, protein S19 forms a complex with S13 that binds strongly to the 16S ribosomal RNA. This is Small ribosomal subunit protein uS19 from Shewanella halifaxensis (strain HAW-EB4).